Here is a 695-residue protein sequence, read N- to C-terminus: Threonine--tRNA ligase (695 aa).

The region spanning 1-66 (MSAPARPAPA…DTDVEVTPVA (66 aa)) is the TGS domain. The interval 263–569 (DHRKLGVELD…LTEHYAGAFP (307 aa)) is catalytic. 3 residues coordinate Zn(2+): C368, H419, and H546.

Belongs to the class-II aminoacyl-tRNA synthetase family. In terms of assembly, homodimer. It depends on Zn(2+) as a cofactor.

Its subcellular location is the cytoplasm. The enzyme catalyses tRNA(Thr) + L-threonine + ATP = L-threonyl-tRNA(Thr) + AMP + diphosphate + H(+). In terms of biological role, catalyzes the attachment of threonine to tRNA(Thr) in a two-step reaction: L-threonine is first activated by ATP to form Thr-AMP and then transferred to the acceptor end of tRNA(Thr). Also edits incorrectly charged L-seryl-tRNA(Thr). This is Threonine--tRNA ligase from Mycolicibacterium gilvum (strain PYR-GCK) (Mycobacterium gilvum (strain PYR-GCK)).